The primary structure comprises 204 residues: Ras-related and estrogen-regulated growth inhibitor-like protein (204 aa).

The interval methionine 1–valine 204 is small GTPase-like. GTP-binding positions include glycine 10 to serine 17, aspartate 57 to glutamine 63, and asparagine 122 to aspartate 125.

Belongs to the small GTPase superfamily. Ras family.

The catalysed reaction is GTP + H2O = GDP + phosphate + H(+). Its function is as follows. Binds GDP/GTP and may possess intrinsic GTPase activity. The sequence is that of Ras-related and estrogen-regulated growth inhibitor-like protein (RERGL) from Bos taurus (Bovine).